The primary structure comprises 359 residues: Alanine racemase (359 aa).

Lys34 functions as the Proton acceptor; specific for D-alanine in the catalytic mechanism. Lys34 is subject to N6-(pyridoxal phosphate)lysine. Residue Arg129 coordinates substrate. Residue Tyr255 is the Proton acceptor; specific for L-alanine of the active site. Residue Met303 participates in substrate binding.

Belongs to the alanine racemase family. Requires pyridoxal 5'-phosphate as cofactor.

The catalysed reaction is L-alanine = D-alanine. Its pathway is amino-acid biosynthesis; D-alanine biosynthesis; D-alanine from L-alanine: step 1/1. Catalyzes the interconversion of L-alanine and D-alanine. May also act on other amino acids. In Shigella dysenteriae serotype 1 (strain Sd197), this protein is Alanine racemase (alr).